The following is a 159-amino-acid chain: MNIRRKNRLWIACAVLAGLALTITLVLYALRSNIDLFYTPGEILYGKRETHQLPEVGQRLRVGGMVMPGSVKRDPDSLKVNFSIYDAEGVVDVTYEGILPDLFREGQGVVVQGELGEKNHVQAKEVLAKHDENYTPPEVEKAMQENHRRPESVYKDKAS.

Residues 1–8 (MNIRRKNR) lie on the Cytoplasmic side of the membrane. Residues 9–29 (LWIACAVLAGLALTITLVLYA) form a helical; Signal-anchor for type II membrane protein membrane-spanning segment. Over 30–159 (LRSNIDLFYT…PESVYKDKAS (130 aa)) the chain is Periplasmic. Residues H130 and Y134 each contribute to the heme site. The disordered stretch occupies residues 130–159 (HDENYTPPEVEKAMQENHRRPESVYKDKAS).

It belongs to the CcmE/CycJ family.

The protein resides in the cell inner membrane. Its function is as follows. Heme chaperone required for the biogenesis of c-type cytochromes. Transiently binds heme delivered by CcmC and transfers the heme to apo-cytochromes in a process facilitated by CcmF and CcmH. This is Cytochrome c-type biogenesis protein CcmE from Citrobacter koseri (strain ATCC BAA-895 / CDC 4225-83 / SGSC4696).